A 364-amino-acid chain; its full sequence is Peroxidase (364 aa).

Residues 1–20 (MKLSLFSTFAAVIIGALALP) form the signal peptide. Gln-21 carries the pyrrolidone carboxylic acid modification. Disulfide bonds link Cys-32–Cys-44, Cys-43–Cys-313, Cys-63–Cys-149, and Cys-277–Cys-342. His-76 functions as the Proton acceptor in the catalytic mechanism. Ca(2+) is bound by residues Asp-77, Gly-95, Asp-97, and Ser-99. N-linked (GlcNAc...) (high mannose) asparagine glycosylation is present at Asn-163. His-204 is a binding site for heme b. Ca(2+)-binding residues include Ser-205, Asp-222, Thr-224, Val-227, and Asp-229.

The protein belongs to the peroxidase family. Ligninase subfamily. Requires Ca(2+) as cofactor. Heme b serves as cofactor.

The protein resides in the secreted. The catalysed reaction is 2 a phenolic donor + H2O2 = 2 a phenolic radical donor + 2 H2O. The sequence is that of Peroxidase from Arthromyces ramosus.